The following is a 536-amino-acid chain: CTP synthase (536 aa).

The amidoligase domain stretch occupies residues 1 to 267 (MSKFVFVTGG…CKETLKYLEL (267 aa)). Residue S13 participates in CTP binding. S13 contacts UTP. Residues 14–19 (SIGKGI) and D71 contribute to the ATP site. Positions 71 and 141 each coordinate Mg(2+). CTP is bound by residues 148 to 150 (DIE), 188 to 193 (KTKPTQ), and K224. Residues 188 to 193 (KTKPTQ) and K224 contribute to the UTP site. Positions 292 to 534 (KVALVGKYIE…IKSSQENLTQ (243 aa)) constitute a Glutamine amidotransferase type-1 domain. Position 354 (G354) interacts with L-glutamine. The active-site Nucleophile; for glutamine hydrolysis is the C381. Residues 382-385 (LGMQ), E405, and R462 contribute to the L-glutamine site. Active-site residues include H507 and E509.

It belongs to the CTP synthase family. Homotetramer.

It catalyses the reaction UTP + L-glutamine + ATP + H2O = CTP + L-glutamate + ADP + phosphate + 2 H(+). The enzyme catalyses L-glutamine + H2O = L-glutamate + NH4(+). The catalysed reaction is UTP + NH4(+) + ATP = CTP + ADP + phosphate + 2 H(+). The protein operates within pyrimidine metabolism; CTP biosynthesis via de novo pathway; CTP from UDP: step 2/2. With respect to regulation, allosterically activated by GTP, when glutamine is the substrate; GTP has no effect on the reaction when ammonia is the substrate. The allosteric effector GTP functions by stabilizing the protein conformation that binds the tetrahedral intermediate(s) formed during glutamine hydrolysis. Inhibited by the product CTP, via allosteric rather than competitive inhibition. Catalyzes the ATP-dependent amination of UTP to CTP with either L-glutamine or ammonia as the source of nitrogen. Regulates intracellular CTP levels through interactions with the four ribonucleotide triphosphates. This is CTP synthase from Prochlorococcus marinus (strain MIT 9312).